A 295-amino-acid chain; its full sequence is MTNVTGTERVKRGMAEMQKGGVIMDVVNAEQARIAEEAGAVAVMALERVPADIRAAGGVSRMADPTIVEEVMGAVSIPVMAKCRIGHLVEARVLESLGVDYIDESEVLTPADEVYHLNKRDYTVPFVCGCRDIGEAARRIAEGAAMLRTKGEPGTGNIVEAVRHMRQVNAEIRQVASLREDELMTYAKNTGAPYEVLLEIKRLGRLPVVNFAAGGVATPADAALMMQLGADGVFVGSGIFKSENPEKFARAIVEATTHYEDYELIASLSKGLGNAMKGIEISTLLPEQRMQERGW.

Residue Asp25 participates in D-ribose 5-phosphate binding. Lys82 functions as the Schiff-base intermediate with D-ribose 5-phosphate in the catalytic mechanism. Residue Gly154 participates in D-ribose 5-phosphate binding. Arg166 is a D-glyceraldehyde 3-phosphate binding site. D-ribose 5-phosphate-binding positions include Gly215 and 236 to 237; that span reads GS.

It belongs to the PdxS/SNZ family. As to quaternary structure, in the presence of PdxT, forms a dodecamer of heterodimers.

The enzyme catalyses aldehydo-D-ribose 5-phosphate + D-glyceraldehyde 3-phosphate + L-glutamine = pyridoxal 5'-phosphate + L-glutamate + phosphate + 3 H2O + H(+). It functions in the pathway cofactor biosynthesis; pyridoxal 5'-phosphate biosynthesis. Functionally, catalyzes the formation of pyridoxal 5'-phosphate from ribose 5-phosphate (RBP), glyceraldehyde 3-phosphate (G3P) and ammonia. The ammonia is provided by the PdxT subunit. Can also use ribulose 5-phosphate and dihydroxyacetone phosphate as substrates, resulting from enzyme-catalyzed isomerization of RBP and G3P, respectively. The chain is Pyridoxal 5'-phosphate synthase subunit PdxS from Bacillus mycoides (strain KBAB4) (Bacillus weihenstephanensis).